Reading from the N-terminus, the 411-residue chain is MLDLKNLQNNFDEVAKKLKNKKVDENILKKLAELFASLKKEKTALEEFQAFQNKFSKELATAEDKESLKAKLSENKSKINEQSAKVNALENELEEIAHAIPNIPDECVPVGEDEDENVELKKVLNPSSFDFTPKEHFELGESLNWLDFVRGVKISQSRFCVLKNEGALLSRALVNYMIDFNRSRGFEFVNVPFLVNGATMFGTGQLPKFKEDMYKVDDEDLYLISTSEIPVTNLYSGEILASETLPIKMTCYSACFRKEAGSAGRDTRGIIRQHQFEKVELVSITKPEQSDSVFNEMLECASDLLSSLGLAHRHLMLCTGDLGFSAAKTVDLEVWLPGQNKYREISSVSNCRDFQARRAKIRYKNEQGKNELVHTLNGSSLAVGRTLVAIMENYQDKEGKIHIPDVLKKYF.

Position 226 to 228 (226 to 228) interacts with L-serine; the sequence is TSE. 257-259 provides a ligand contact to ATP; that stretch reads RKE. Glu280 provides a ligand contact to L-serine. 344–347 provides a ligand contact to ATP; the sequence is EISS. Residue Ser379 participates in L-serine binding.

This sequence belongs to the class-II aminoacyl-tRNA synthetase family. Type-1 seryl-tRNA synthetase subfamily. Homodimer. The tRNA molecule binds across the dimer.

The protein localises to the cytoplasm. It catalyses the reaction tRNA(Ser) + L-serine + ATP = L-seryl-tRNA(Ser) + AMP + diphosphate + H(+). The enzyme catalyses tRNA(Sec) + L-serine + ATP = L-seryl-tRNA(Sec) + AMP + diphosphate + H(+). It functions in the pathway aminoacyl-tRNA biosynthesis; selenocysteinyl-tRNA(Sec) biosynthesis; L-seryl-tRNA(Sec) from L-serine and tRNA(Sec): step 1/1. Its function is as follows. Catalyzes the attachment of serine to tRNA(Ser). Is also able to aminoacylate tRNA(Sec) with serine, to form the misacylated tRNA L-seryl-tRNA(Sec), which will be further converted into selenocysteinyl-tRNA(Sec). In Campylobacter jejuni subsp. jejuni serotype O:23/36 (strain 81-176), this protein is Serine--tRNA ligase.